The primary structure comprises 371 residues: 4-hydroxy-3-methylbut-2-en-1-yl diphosphate synthase (flavodoxin) (371 aa).

The [4Fe-4S] cluster site is built by C270, C273, C305, and E312.

It belongs to the IspG family. [4Fe-4S] cluster is required as a cofactor.

The catalysed reaction is (2E)-4-hydroxy-3-methylbut-2-enyl diphosphate + oxidized [flavodoxin] + H2O + 2 H(+) = 2-C-methyl-D-erythritol 2,4-cyclic diphosphate + reduced [flavodoxin]. It functions in the pathway isoprenoid biosynthesis; isopentenyl diphosphate biosynthesis via DXP pathway; isopentenyl diphosphate from 1-deoxy-D-xylulose 5-phosphate: step 5/6. Converts 2C-methyl-D-erythritol 2,4-cyclodiphosphate (ME-2,4cPP) into 1-hydroxy-2-methyl-2-(E)-butenyl 4-diphosphate. This chain is 4-hydroxy-3-methylbut-2-en-1-yl diphosphate synthase (flavodoxin), found in Shewanella sediminis (strain HAW-EB3).